Consider the following 348-residue polypeptide: Phospho-2-dehydro-3-deoxyheptonate aldolase, Trp-sensitive (348 aa).

The protein belongs to the class-I DAHP synthase family.

The catalysed reaction is D-erythrose 4-phosphate + phosphoenolpyruvate + H2O = 7-phospho-2-dehydro-3-deoxy-D-arabino-heptonate + phosphate. The protein operates within metabolic intermediate biosynthesis; chorismate biosynthesis; chorismate from D-erythrose 4-phosphate and phosphoenolpyruvate: step 1/7. Functionally, stereospecific condensation of phosphoenolpyruvate (PEP) and D-erythrose-4-phosphate (E4P) giving rise to 3-deoxy-D-arabino-heptulosonate-7-phosphate (DAHP). This Escherichia coli (strain K12) protein is Phospho-2-dehydro-3-deoxyheptonate aldolase, Trp-sensitive (aroH).